Reading from the N-terminus, the 320-residue chain is Cytochrome f (320 aa).

Residues 1 to 35 form the signal peptide; sequence MENRNTFSWVKEQMTRSISVSIMIYVITRTSISNA. Heme contacts are provided by Y36, C56, C59, and H60. A helical transmembrane segment spans residues 286–306; sequence VQGLLFFFASVILAQVFLVLK.

It belongs to the cytochrome f family. The 4 large subunits of the cytochrome b6-f complex are cytochrome b6, subunit IV (17 kDa polypeptide, petD), cytochrome f and the Rieske protein, while the 4 small subunits are PetG, PetL, PetM and PetN. The complex functions as a dimer. Requires heme as cofactor.

It is found in the plastid. The protein resides in the chloroplast thylakoid membrane. Functionally, component of the cytochrome b6-f complex, which mediates electron transfer between photosystem II (PSII) and photosystem I (PSI), cyclic electron flow around PSI, and state transitions. This is Cytochrome f from Oryza nivara (Indian wild rice).